The chain runs to 267 residues: Non-homologous end joining protein Ku (267 aa).

The Ku domain occupies 10-190 (ISFGLVSFPV…TKYTAKELEL (181 aa)).

The protein belongs to the prokaryotic Ku family. Homodimer. Interacts with LigD.

In terms of biological role, with LigD forms a non-homologous end joining (NHEJ) DNA repair enzyme, which repairs dsDNA breaks with reduced fidelity. Binds linear dsDNA with 5'- and 3'- overhangs but not closed circular dsDNA nor ssDNA. Recruits and stimulates the ligase activity of LigD. This chain is Non-homologous end joining protein Ku, found in Solibacter usitatus (strain Ellin6076).